The sequence spans 418 residues: Serine/threonine-protein kinase PCRK1 (418 aa).

Positions 36-63 (GSEFNSRDVSGTSTESSMGRKNSYPPVS) are disordered. Residues 84-369 (FSRSVMIGEG…EVLEMVNKIV (286 aa)) form the Protein kinase domain. ATP-binding positions include 90–98 (IGEGGFGCV) and K118. Catalysis depends on D218, which acts as the Proton acceptor. A phosphoserine mark is found at S373, S377, and S385.

The protein belongs to the protein kinase superfamily. Ser/Thr protein kinase family. In terms of assembly, interacts with FLS2.

The protein resides in the cell membrane. The catalysed reaction is L-seryl-[protein] + ATP = O-phospho-L-seryl-[protein] + ADP + H(+). It carries out the reaction L-threonyl-[protein] + ATP = O-phospho-L-threonyl-[protein] + ADP + H(+). Its function is as follows. Involved in the activation of early immune responses. Plays a role in pattern-triggered immunity (PTI) induced by pathogen-associated molecular patterns (PAMPs) and damage-associated molecular patterns (DAMPs). Contributes to PTI in response to the bacterial pathogen Pseudomonas syringae pv maculicola strain ES4326. Contributes to PTI in response to the bacterial pathogen Pseudomonas syringae pv tomato strain DC3000. Functions redundantly with PCRK2 in basal resistance against bacterial pathogens and in regulation of plant immunity. Functions together with PCRK2 downstream of the PAMP receptor FLS2. Contributes to the induction of SARD1 and CBP60G, which are transcriptional activator of ICS1, an enzyme involved in salicylate (SA) biosynthesis upon pathogen attack. In Arabidopsis thaliana (Mouse-ear cress), this protein is Serine/threonine-protein kinase PCRK1.